The chain runs to 534 residues: Potential RNA-dependent RNA polymerase (534 aa).

The RdRp catalytic domain maps to 255-373; that stretch reads DVVVCTDFSK…TYPGISAEDV (119 aa).

It is found in the virion. The enzyme catalyses RNA(n) + a ribonucleoside 5'-triphosphate = RNA(n+1) + diphosphate. In terms of biological role, RNA-directed RNA polymerase that is involved in both transcription and genome replication. In Human picobirnavirus (strain Human/Thailand/Hy005102/-) (PBV), this protein is Potential RNA-dependent RNA polymerase (Segment-2).